We begin with the raw amino-acid sequence, 213 residues long: MKAFTKITAIVAPLDRSNVDTDAIIPKQFLKSIKRSGFGPNAFDEWRYLDHGEPGMDNSKRPLNPDFSLNQPRYQGAQILLTRKNFGCGSSREHAPWALDDYGFRAVIAPSFADIFFNNCYKNGLLPIVLTEERVDRLFKEVEANEGYQLSIDLAEQTLTTPSGETFTFDITEHRKHCLLNGLDEIGLTLQHADEIHAFEEKRRQSQPWLFNG.

It belongs to the LeuD family. LeuD type 1 subfamily. In terms of assembly, heterodimer of LeuC and LeuD.

The catalysed reaction is (2R,3S)-3-isopropylmalate = (2S)-2-isopropylmalate. The protein operates within amino-acid biosynthesis; L-leucine biosynthesis; L-leucine from 3-methyl-2-oxobutanoate: step 2/4. Its function is as follows. Catalyzes the isomerization between 2-isopropylmalate and 3-isopropylmalate, via the formation of 2-isopropylmaleate. This chain is 3-isopropylmalate dehydratase small subunit, found in Neisseria meningitidis serogroup B (strain ATCC BAA-335 / MC58).